The chain runs to 91 residues: Large ribosomal subunit protein bL27 (91 aa).

Positions 1 to 20 are disordered; sequence MAHKKGVGSSKNGRDSNPKY.

Belongs to the bacterial ribosomal protein bL27 family.

The protein is Large ribosomal subunit protein bL27 of Deinococcus geothermalis (strain DSM 11300 / CIP 105573 / AG-3a).